The sequence spans 148 residues: MGRAGPRSTADTRPRATVITTRRPRPWQKPTSPRRLHRRRPRGQPASENAAEPSQVAISKGKSPDYANGGKAAMDSRASDAINKSKVDTSASNPSQRRPSRLRGKRSLALPPRLECLFPSSCGSRRATSRPGFPPLEGSHLGCQLLPL.

The tract at residues 1 to 108 (MGRAGPRSTA…PSRLRGKRSL (108 aa)) is disordered. The span at 22–42 (RRPRPWQKPTSPRRLHRRRPR) shows a compositional bias: basic residues. The span at 88 to 97 (DTSASNPSQR) shows a compositional bias: polar residues.

This is an uncharacterized protein from Homo sapiens (Human).